We begin with the raw amino-acid sequence, 1741 residues long: MEGNRTENLCNRSFGWLQRQENDVKPWLWKLSNCFSAAEKTLPCSAKTKDYMENQKGVVESKDASSHNAGSKLFPAVPLPDVHPLQQQQIQLSPGPKVSCCAHGSDSCTPQMHCGVGDGSVIHPGTILDSKSTGTITCQVGSGFAFPSASSLKNPPPRSNLAGIASEFPGMCIENSVSSYQHLPCCGKLHFQSCHGNVHKLHQFPALQSCTPSGYFPCSEFTSGATGRLDEHIAQSELTSHVCASPLHLSVAPSVCLKGSHYCSDCLNKPTRNSLVDAAKIWPNIPPPNTQTGPVSIPICNGCGTQGTGNEKSLLLASSLGKSPQKYGSPEVAVAGQVLENLPPIGVFWDIENCSVPTGRSAVAVVQRIREKFFKGHREAEFICVCDISKENKEVIQELNNCQVTVAHINATAKNAADDKLRQSLRRFADTHTAPATVVLVSTDVNFALELSDLRHRHGFRIILVHKNQASEALLHHAHELVCFEEFISDLPPRLPLKMPACHTLLYVYNLPTNRDSKSVSNRLRRLSDNCGGKVLSISGSSAILRFLNQESAERAWKRMENEDVFGNRIVVSFAPKNKELNETKSSNFVGTEKVKSPKKVNRSTKLCITNKDGSDQSSGTKGSAGRGLQSHGSVIKPTNVKSLQELCRLESKTISRNTENHQEHLREIPSQNNSHAAAPVSLTTKKSGVGESSCKSSYKKETSVSRSMTNSPVDKKDKDEAVFQVSYPSAFSKLTASRQLSPLFVSQNCWSSRSMSPNLSNRSSPLTFNVVNHTSGTDCPDPFANGADIQISNIDYRLSRKELQQTLQETFSRHGKVKCVELSPHTDYQLKATVQMENLQEAISAVNSLHRYKIGSKRIQVSLATGAANKSLSLLSSETVSILQDAPACCLPMFKFTEIYEKKFGRKLMVSDLYKLTDTVAIRDQGGGRLVCLLPSSQARQSPLGSSQSHDGSSANCSPIIFEELEYHEPVCKQHCLNKDVIEHEFDPDSYRIPFAILSLKTFAPQVHSLLQTHEGTVPLLSFPDCYMSEFNDLEMVPEGQGGVPLEHLITCVPGVNIATAQNGIKVIKWIHNKPPPPTTVDPWLLRSKSPVGNPQLIQFSREVIDLLKSQPSCIIPVSKFIPTYHHHFAKQCRVSDYGYSKLMELLEAVPHVLQILGMGSKRLLTLTHRAQVKRFTQDLLKLLKSQASKQVIVKEFLQAYHWCFSKDWDVTEYGVCELADIISEIPDTTICLSQQDNEMVICIPKRERTQEEIERTKQFSKEVVDLLRHQPHFRMPFSKFIPSYHHHFGRQCKLAYYGFTKLLELFEAIPEVLQVLECGEEKILTLTEVEQVKAVAAQFVKLLRSQKDNCLMMSDLLSEYSKTFGYTLRLHDYDVSSVPALMQKLCHVVKVVDTESGKQIQLINRKSLRTLTAQLLVLLMSWDGASFLSVEQLKQHYETIHSTSLNPCEYGFMTLTELLKSLPYLVEVFTNGAEEEYVRLTNLYMFAKNVRSLLHTYHYQQIFLHEFLVAYSKYTGEVLQPKAYGCNNLEELLGAIPQVVWIKGHGHKRIVVLKNDMKTRFSSPSFPLADHVDDHGNQLDDHNGHIMETPGSTSSMELSLGTPSNAPNQTEQELLCLTNTSPVDLLCEPVPSCLPSPQLRPDPVVLESADLIQFEERPVPLSEMMILTEEEKQKIVTTAQEKLTSGSVASSTAENTSVPPRHSSETQLNKEAMDSPAKKQHKNKVKLAANFSLAPVTKL.

Residues 345–482 (IGVFWDIENC…ALLHHAHELV (138 aa)) enclose the NYN domain. Disordered regions lie at residues 594–636 (KVKS…GSVI), 659–678 (TENH…SHAA), and 683–716 (LTTK…PVDK). The segment covering 659 to 668 (TENHQEHLRE) has biased composition (basic and acidic residues). An RRM domain is found at 788–867 (ADIQISNIDY…KRIQVSLATG (80 aa)). HTH OST-type domains lie at 872-946 (SLSL…SPLG), 1000-1076 (SLKT…HNKP), 1097-1171 (QLIQ…LTHR), 1173-1248 (QVKR…IPKR), 1257-1332 (RTKQ…TEVE), 1333-1408 (QVKA…INRK), 1409-1483 (SLRT…VRLT), and 1484-1558 (NLYM…LKND). A compositionally biased stretch (polar residues) spans 1684–1700 (KLTSGSVASSTAENTSV). Residues 1684 to 1727 (KLTSGSVASSTAENTSVPPRHSSETQLNKEAMDSPAKKQHKNKV) are disordered.

It is found in the peroxisome. Essential regulator of oogenesis required for female meiotic progression to repress transposable elements and preventing their mobilization, which is essential for the germline integrity. The sequence is that of Meiosis regulator and mRNA stability factor 1 from Gallus gallus (Chicken).